We begin with the raw amino-acid sequence, 389 residues long: MSQYSFTSESVSEGHPDKIADQISDAILDSILAQDPRARVACETYVKTGIVIMGGEITTTAWVNMEEIARNTIRDIGYVHSDMGFDANSCVILSVINKQSSDIQYSIDHGNTSTLQRGAGDQGLMFGYATNETSVFMPAPITYAHRLIKRKSQVRKSGVLPWLGLDAKSQVTVAYEHGKIIGITAVVLSIQHACDIKLTDLKEAAMEEIIKPVLPNKWLTNNTIFLINPGGRFVIGGPISDCGLTGRKIIVDTYGGIGRHGGGSFSGKDPSKVDRSAAYGARYVAKNIVAAGLADRCELQVSYAIGVPHPISMSIETFGTEKISHDILMQLIKNFFDFRPYGLIAMLDLLRPIYKETAVYGHFGRECFPWEKIDKADLLRDAAGLKCTP.

Position 15 (H15) interacts with ATP. D17 contributes to the Mg(2+) binding site. E43 provides a ligand contact to K(+). E56 and Q99 together coordinate L-methionine. The interval 99–109 (QSSDIQYSIDH) is flexible loop. ATP is bound by residues 166–168 (DAK), 232–233 (RF), D241, 247–248 (RK), S264, and K268. D241 is an L-methionine binding site. K272 contacts L-methionine.

Belongs to the AdoMet synthase family. In terms of assembly, homotetramer; dimer of dimers. Requires Mg(2+) as cofactor. K(+) serves as cofactor.

The protein resides in the cytoplasm. The catalysed reaction is L-methionine + ATP + H2O = S-adenosyl-L-methionine + phosphate + diphosphate. It participates in amino-acid biosynthesis; S-adenosyl-L-methionine biosynthesis; S-adenosyl-L-methionine from L-methionine: step 1/1. In terms of biological role, catalyzes the formation of S-adenosylmethionine (AdoMet) from methionine and ATP. The overall synthetic reaction is composed of two sequential steps, AdoMet formation and the subsequent tripolyphosphate hydrolysis which occurs prior to release of AdoMet from the enzyme. This Blochmanniella pennsylvanica (strain BPEN) protein is S-adenosylmethionine synthase.